A 581-amino-acid polypeptide reads, in one-letter code: Threonine--tRNA ligase (581 aa).

The interval 185 to 478 (DHRKLGKELD…LIEHYGGAFP (294 aa)) is catalytic. The Zn(2+) site is built by Cys278, His329, and His455.

The protein belongs to the class-II aminoacyl-tRNA synthetase family. As to quaternary structure, homodimer. Zn(2+) is required as a cofactor.

The protein resides in the cytoplasm. It carries out the reaction tRNA(Thr) + L-threonine + ATP = L-threonyl-tRNA(Thr) + AMP + diphosphate + H(+). Catalyzes the attachment of threonine to tRNA(Thr) in a two-step reaction: L-threonine is first activated by ATP to form Thr-AMP and then transferred to the acceptor end of tRNA(Thr). Also edits incorrectly charged L-seryl-tRNA(Thr). This is Threonine--tRNA ligase from Borreliella afzelii (strain PKo) (Borrelia afzelii).